The chain runs to 430 residues: Adenosylhomocysteinase (430 aa).

Residues T56, D131, and E156 each coordinate substrate. 157 to 159 (TTT) contacts NAD(+). Residues K186 and D190 each contribute to the substrate site. NAD(+) contacts are provided by residues N191, 220-225 (GFGDVG), E243, N278, 299-301 (IGH), and N344.

The protein belongs to the adenosylhomocysteinase family. It depends on NAD(+) as a cofactor.

It localises to the cytoplasm. The enzyme catalyses S-adenosyl-L-homocysteine + H2O = L-homocysteine + adenosine. It functions in the pathway amino-acid biosynthesis; L-homocysteine biosynthesis; L-homocysteine from S-adenosyl-L-homocysteine: step 1/1. May play a key role in the regulation of the intracellular concentration of adenosylhomocysteine. The chain is Adenosylhomocysteinase from Halorhodospira halophila (strain DSM 244 / SL1) (Ectothiorhodospira halophila (strain DSM 244 / SL1)).